The sequence spans 119 residues: MMIKIAVVLCAVMATTMVRAKYVEEQELADLLDLLISEEVSSPDDAVALQGWWRRTVDKVRNAGRKVAGFASKACGALGHSPQEARAKVLEAFPEMKEADLDEEDIGKYCGYAHALNGR.

The first 20 residues, 1 to 20 (MMIKIAVVLCAVMATTMVRA), serve as a signal peptide directing secretion. Positions 21–50 (KYVEEQELADLLDLLISEEVSSPDDAVALQ) are excised as a propeptide. A 6'-bromotryptophan mark is found at Trp52 and Trp53. Cys75 and Cys110 form a disulfide bridge. Residues 81-104 (SPQEARAKVLEAFPEMKEADLDEE) constitute a propeptide that is removed on maturation. Asn117 carries the post-translational modification Asparagine amide.

In terms of assembly, heterodimer of a light and a heavy chain, probably disulfide-linked.

In terms of biological role, has antimicrobial activity against Gram-negative bacteria, Gram-positive bacteria and against fungi with minimum inhibitory concentration (MIC) between 0.78 uM and 50 uM. Shows little hemolytic activity even at a concentration of 100 uM. Has no antimicrobial activity. Shows no hemolytic activity. The chain is Centrocin 1 from Echinus esculentus (Sea urchin).